Consider the following 181-residue polypeptide: Large ribosomal subunit protein uL10 (181 aa).

This sequence belongs to the universal ribosomal protein uL10 family. As to quaternary structure, part of the ribosomal stalk of the 50S ribosomal subunit. The N-terminus interacts with L11 and the large rRNA to form the base of the stalk. The C-terminus forms an elongated spine to which L12 dimers bind in a sequential fashion forming a multimeric L10(L12)X complex.

In terms of biological role, forms part of the ribosomal stalk, playing a central role in the interaction of the ribosome with GTP-bound translation factors. This is Large ribosomal subunit protein uL10 from Protochlamydia amoebophila (strain UWE25).